Consider the following 351-residue polypeptide: Cyclic AMP-dependent transcription factor ATF-4 (351 aa).

Lysine 53 is covalently cross-linked (Glycyl lysine isopeptide (Lys-Gly) (interchain with G-Cter in SUMO2)). A disordered region spans residues 210-268 (EEDTPSDNDSGICMSPESYLGSPQHSPSTRGSPNRSLPSPGVLCGSARPKPYDPPGEKM). The residue at position 213 (threonine 213) is a Phosphothreonine. Residue serine 215 is modified to Phosphoserine; by CK2. A BetaTrCP degron motif motif is present at residues 215–224 (SDNDSGICMS). Residues serine 219, serine 224, serine 231, and serine 235 each carry the phosphoserine modification. Residues 230 to 246 (GSPQHSPSTRGSPNRSL) are compositionally biased toward polar residues. Proline 236 is modified (4-hydroxyproline). Position 245 is a phosphoserine; by RPS6KA3 (serine 245). Serine 248 carries the phosphoserine modification. Residues lysine 259, lysine 267, and lysine 272 each participate in a glycyl lysine isopeptide (Lys-Gly) (interchain with G-Cter in SUMO2) cross-link. The 64-residue stretch at 278–341 (LDKKLKKMEQ…QYLKDLIEEV (64 aa)) folds into the bZIP domain. Residues 280-300 (KKLKKMEQNKTAATRYRQKKR) form a basic motif region. Positions 280 to 340 (KKLKKMEQNK…IQYLKDLIEE (61 aa)) form a coiled coil. Positions 305-341 (ALTGECKELEKKNEALKERADSLAKEIQYLKDLIEEV) are interaction with GABBR1. The leucine-zipper stretch occupies residues 306 to 334 (LTGECKELEKKNEALKERADSLAKEIQYL). Lysine 311 carries the N6-acetyllysine modification.

This sequence belongs to the bZIP family. In terms of assembly, binds DNA as a homodimer and as a heterodimer. Heterodimer; heterodimerizes with CEBPB. Heterodimer; heterodimerizes with DDIT3/CHOP. Interacts with CEP290 (via an N-terminal region). Interacts with NEK6, DAPK2 (isoform 2) and ZIPK/DAPK3. Interacts (via its leucine zipper domain) with GABBR1 and GABBR2 (via their C-termini). Forms a heterodimer with TXLNG in osteoblasts. Interacts (via its DNA binding domain) with FOXO1 (C-terminal half); the interaction occurs in osteoblasts and regulates glucose homeostasis through suppression of beta-cell proliferation and a decrease in insulin production. Interacts with SATB2; the interaction results in enhanced DNA binding and transactivation by these transcription factors. Interacts with ABRAXAS2. Interacts with TRIB3, inhibiting the transactivation activity of ATF4. Interacts with DISC1; which inhibits ATF4 transcription factor activity by disrupting ATF4 dimerization and DNA-binding. Interacts with EP300/p300; EP300/p300 stabilizes ATF4 and increases its transcriptional activity independently of its catalytic activity by preventing its ubiquitination. Ubiquitinated by SCF(BTRC) in response to mTORC1 signal, followed by proteasomal degradation and leading to down-regulate expression of SIRT4. Interaction with EP300/p300 inhibits ubiquitination by SCF(BTRC). In terms of processing, phosphorylation at Ser-245 by RPS6KA3/RSK2 in osteoblasts enhances transactivation activity and promotes osteoblast differentiation. Phosphorylated on the betaTrCP degron motif at Ser-219, followed by phosphorylation at Thr-213, Ser-224, Ser-231, Ser-235 and Ser-248, promoting interaction with BTRC and ubiquitination. Phosphorylation is promoted by mTORC1. Phosphorylation at Ser-215 by CK2 decreases its stability. Phosphorylated by NEK6. Post-translationally, hydroxylated by PHD3, leading to decreased protein stability.

Its subcellular location is the nucleus. It localises to the nucleus speckle. The protein resides in the cytoplasm. The protein localises to the cell membrane. It is found in the cytoskeleton. Its subcellular location is the microtubule organizing center. It localises to the centrosome. In terms of biological role, transcription factor that binds the cAMP response element (CRE) (consensus: 5'-GTGACGT[AC][AG]-3') and displays two biological functions, as regulator of metabolic and redox processes under normal cellular conditions, and as master transcription factor during integrated stress response (ISR). Binds to asymmetric CRE's as a heterodimer and to palindromic CRE's as a homodimer. Core effector of the ISR, which is required for adaptation to various stress such as endoplasmic reticulum (ER) stress, amino acid starvation, mitochondrial stress or oxidative stress. During ISR, ATF4 translation is induced via an alternative ribosome translation re-initiation mechanism in response to EIF2S1/eIF-2-alpha phosphorylation, and stress-induced ATF4 acts as a master transcription factor of stress-responsive genes in order to promote cell recovery. Promotes the transcription of genes linked to amino acid sufficiency and resistance to oxidative stress to protect cells against metabolic consequences of ER oxidation. Activates the transcription of NLRP1, possibly in concert with other factors in response to ER stress. Activates the transcription of asparagine synthetase (ASNS) in response to amino acid deprivation or ER stress. However, when associated with DDIT3/CHOP, the transcriptional activation of the ASNS gene is inhibited in response to amino acid deprivation. Together with DDIT3/CHOP, mediates programmed cell death by promoting the expression of genes involved in cellular amino acid metabolic processes, mRNA translation and the terminal unfolded protein response (terminal UPR), a cellular response that elicits programmed cell death when ER stress is prolonged and unresolved. Activates the expression of COX7A2L/SCAF1 downstream of the EIF2AK3/PERK-mediated unfolded protein response, thereby promoting formation of respiratory chain supercomplexes and increasing mitochondrial oxidative phosphorylation. Together with DDIT3/CHOP, activates the transcription of the IRS-regulator TRIB3 and promotes ER stress-induced neuronal cell death by regulating the expression of BBC3/PUMA in response to ER stress. May cooperate with the UPR transcriptional regulator QRICH1 to regulate ER protein homeostasis which is critical for cell viability in response to ER stress. In the absence of stress, ATF4 translation is at low levels and it is required for normal metabolic processes such as embryonic lens formation, fetal liver hematopoiesis, bone development and synaptic plasticity. Acts as a regulator of osteoblast differentiation in response to phosphorylation by RPS6KA3/RSK2: phosphorylation in osteoblasts enhances transactivation activity and promotes expression of osteoblast-specific genes and post-transcriptionally regulates the synthesis of Type I collagen, the main constituent of the bone matrix. Cooperates with FOXO1 in osteoblasts to regulate glucose homeostasis through suppression of beta-cell production and decrease in insulin production. Activates transcription of SIRT4. Regulates the circadian expression of the core clock component PER2 and the serotonin transporter SLC6A4. Binds in a circadian time-dependent manner to the cAMP response elements (CRE) in the SLC6A4 and PER2 promoters and periodically activates the transcription of these genes. Mainly acts as a transcriptional activator in cellular stress adaptation, but it can also act as a transcriptional repressor: acts as a regulator of synaptic plasticity by repressing transcription, thereby inhibiting induction and maintenance of long-term memory. Regulates synaptic functions via interaction with DISC1 in neurons, which inhibits ATF4 transcription factor activity by disrupting ATF4 dimerization and DNA-binding. Functionally, (Microbial infection) Binds to a Tax-responsive enhancer element in the long terminal repeat of HTLV-I. In Homo sapiens (Human), this protein is Cyclic AMP-dependent transcription factor ATF-4.